A 78-amino-acid chain; its full sequence is U-scoloptoxin(15)-Ssm2a (78 aa).

Positions 1-23 (MEKKIIFLCFFVSLLTLPEFISS) are cleaved as a signal peptide. The important for inhibition of KCNQ4 stretch occupies residues 34–37 (PEKK). 2 disulfide bridges follow: C44–C70 and C48–C72.

The protein belongs to the SLPTX(15) family. In terms of tissue distribution, expressed by the venom gland.

It localises to the secreted. The protein is U-scoloptoxin(15)-Ssm2a of Scolopendra mutilans (Chinese red-headed centipede).